Here is a 114-residue protein sequence, read N- to C-terminus: Lectin MVL (114 aa).

Copy 1 of the repeat occupies 2-55 (ASYKVNIPAGPLWSNAEAQQVGPKIAAAHQGNFTGQWTTVVESAMSVVEVELQV). A carbohydrate contacts are provided by residues 12–16 (PLWSN), Gln-20, and 36–44 (GQWTTVVES). The linker stretch occupies residues 56–60 (ENTGI). Repeat unit 2 spans residues 61–114 (HEFKTDVLAGPLWSNDEAQKLGPQIAASYGAEFTGQWRTIVEGVMSVIQIKYTF). A carbohydrate contacts are provided by residues 71-75 (PLWSN), Gln-79, and 95-103 (GQWRTIVEG).

Homodimer.

It localises to the cytoplasm. Functionally, carbohydrate-binding protein that binds oligomannosides such as Man(6)GlcNAc(2) with sub-micromolar affinities. The specificity of MVL is unique in that its minimal target comprises the Man-alpha-(1-&gt;6)-Man-beta-(1-&gt;4)-GlcNAc-beta-(1-&gt;4)-GlcNAc tetrasaccharide core (Man(2)A) found in N-linked oligomannosides. Displays hemagglutininating activity on rabbit, horse and hen erythrocytes. This activity is inhibited by yeast mannan. Does not bind mono- and disaccharides. Inhibits HIV-1 envelope-mediated cell fusion at nanomolar concentrations through carbohydrate-mediated interactions with high-mannose residues on the surface of the HIV envelope glycoprotein gp120. In terms of biological role, unexpectedly for a lectin, one of the 2 oligomannose binding sites of MVL can catalyze the cleavage of chitin fragments (such as chitotriose, i.e. GlcNAc(3) or GlcNAc-beta-(1-&gt;4)-GlcNAcbeta-(1-&gt;4)-GlcNAc, and chitotetraose, i.e. GlcNAc(4)) to GlcNAc. This weak beta-1,4-glycosidase activity is restricted to the C-terminal carbohydrate-binding site. Does not cleave Man(3)GlcNAc(2) or the tetrasaccharide Man(2)A. This Microcystis viridis (Polycystis viridis) protein is Lectin MVL (mvl).